Here is a 143-residue protein sequence, read N- to C-terminus: Putative pre-16S rRNA nuclease (143 aa).

Belongs to the YqgF nuclease family.

Its subcellular location is the cytoplasm. Functionally, could be a nuclease involved in processing of the 5'-end of pre-16S rRNA. The protein is Putative pre-16S rRNA nuclease (ybeB) of Lactococcus lactis subsp. lactis (strain IL1403) (Streptococcus lactis).